The sequence spans 698 residues: Probable Xaa-Pro aminopeptidase P (698 aa).

Mn(2+) contacts are provided by D509, D520, E604, and E618.

The protein belongs to the peptidase M24B family. Mn(2+) is required as a cofactor.

The enzyme catalyses Release of any N-terminal amino acid, including proline, that is linked to proline, even from a dipeptide or tripeptide.. In terms of biological role, catalyzes the removal of a penultimate prolyl residue from the N-termini of peptides. This Trichophyton verrucosum (strain HKI 0517) protein is Probable Xaa-Pro aminopeptidase P (AMPP).